Reading from the N-terminus, the 246-residue chain is UPF0736 protein GWCH70_0753 (246 aa).

It belongs to the UPF0736 family.

In Geobacillus sp. (strain WCH70), this protein is UPF0736 protein GWCH70_0753.